The chain runs to 218 residues: GEM-like protein 6 (218 aa).

Residues 96–174 form the GRAM domain; that stretch reads KIYKRLFKVC…CKINGVNQSQ (79 aa).

It belongs to the GEM family.

The sequence is that of GEM-like protein 6 from Arabidopsis thaliana (Mouse-ear cress).